Consider the following 352-residue polypeptide: S-adenosylmethionine:tRNA ribosyltransferase-isomerase (352 aa).

The protein belongs to the QueA family. In terms of assembly, monomer.

Its subcellular location is the cytoplasm. It catalyses the reaction 7-aminomethyl-7-carbaguanosine(34) in tRNA + S-adenosyl-L-methionine = epoxyqueuosine(34) in tRNA + adenine + L-methionine + 2 H(+). Its pathway is tRNA modification; tRNA-queuosine biosynthesis. Its function is as follows. Transfers and isomerizes the ribose moiety from AdoMet to the 7-aminomethyl group of 7-deazaguanine (preQ1-tRNA) to give epoxyqueuosine (oQ-tRNA). This chain is S-adenosylmethionine:tRNA ribosyltransferase-isomerase, found in Vibrio cholerae serotype O1 (strain ATCC 39541 / Classical Ogawa 395 / O395).